The following is a 361-amino-acid chain: Palmitoyltransferase ZDHHC16 (361 aa).

Residues 1 to 77 (MRGQRSLLLG…VYWLVDNVIR (77 aa)) lie on the Cytoplasmic side of the membrane. Residues 78–98 (WFGVVFVVLVIVLTGSIVAIA) traverse the membrane as a helical segment. The Lumenal segment spans residues 99–116 (YLCVLPLILRTYSVPRLC). The helical transmembrane segment at 117 to 137 (WHFFYSHWNLILIVFHYYQAI) threads the bilayer. Residues 138-198 (TTPPGYPPQG…NNCVGHYNHR (61 aa)) are Cytoplasmic-facing. The DHHC domain occupies 155-205 (SICKKCIYPKPARTHHCSICNRCVLKMDHHCPWLNNCVGHYNHRYFFSFCF). Cys-185 (S-palmitoyl cysteine intermediate) is an active-site residue. The chain crosses the membrane as a helical span at residues 199-219 (YFFSFCFFMTLGCVYCSYGSW). The Lumenal portion of the chain corresponds to 220-250 (DLFREAYAAIETYHQTPPPTFSFRERITHKS). Residues 251–271 (LVYLWFLCSSVALALGALTMW) traverse the membrane as a helical segment. At 272-361 (HAVLISRGET…TAHSASVMAV (90 aa)) the chain is on the cytoplasmic side.

Belongs to the DHHC palmitoyltransferase family. As to quaternary structure, interacts with ABL1. Interacts with COPS5. As to expression, ubiquitously expressed.

Its subcellular location is the endoplasmic reticulum membrane. The catalysed reaction is L-cysteinyl-[protein] + hexadecanoyl-CoA = S-hexadecanoyl-L-cysteinyl-[protein] + CoA. Palmitoyl acyltransferase that mediates palmitoylation of proteins such as PLN and ZDHHC6. Required during embryonic heart development and cardiac function, possibly by mediating palmitoylation of PLN, thereby affecting PLN phosphorylation and homooligomerization. Also required for eye development. Palmitoylates ZDHHC6, affecting the quaternary assembly of ZDHHC6, its localization, stability and function. May play a role in DNA damage response. May be involved in apoptosis regulation. Involved in the proliferation of neural stem cells by regulating the FGF/ERK pathway. The polypeptide is Palmitoyltransferase ZDHHC16 (Mus musculus (Mouse)).